The primary structure comprises 240 residues: Large ribosomal subunit protein uL2 (240 aa).

The span at 1-11 shows a compositional bias: polar residues; the sequence is MGKRLISQNRG. Disordered regions lie at residues 1-26 and 206-240; these read MGKR…KRKG and GGGR…TGRK. 2 stretches are compositionally biased toward basic residues: residues 13 to 26 and 228 to 240; these read GTPK…KRKG and KVGH…TGRK.

It belongs to the universal ribosomal protein uL2 family. Part of the 50S ribosomal subunit. Forms a bridge to the 30S subunit in the 70S ribosome.

One of the primary rRNA binding proteins. Required for association of the 30S and 50S subunits to form the 70S ribosome, for tRNA binding and peptide bond formation. It has been suggested to have peptidyltransferase activity; this is somewhat controversial. Makes several contacts with the 16S rRNA in the 70S ribosome. In Methanococcus vannielii (strain ATCC 35089 / DSM 1224 / JCM 13029 / OCM 148 / SB), this protein is Large ribosomal subunit protein uL2.